Consider the following 169-residue polypeptide: Major fimbrial subunit SMF-1 (169 aa).

Residues 1-11 (MLAAAPLAANA) form the signal peptide.

It belongs to the fimbrial protein family.

The protein localises to the fimbrium. Involved in adherence to eukaryotic epithelial cells and abiotic surfaces. Mediates agglutination of animal red blood cells. This Stenotrophomonas maltophilia (strain K279a) protein is Major fimbrial subunit SMF-1.